Consider the following 278-residue polypeptide: Ankyrin repeat and SOCS box protein 13 (278 aa).

ANK repeat units follow at residues 18 to 47 (VERT…CVNQ), 51 to 80 (DSIT…QVDA), 84 to 113 (DGST…KVNP), 116 to 145 (YTAS…NLEA), 149 to 178 (HFGT…NVNA), and 181 to 210 (LHET…NIYA). The SOCS box domain occupies 229–278 (AKCFEYYEKTPLSLSQLCRVSLRKATGVRGLEKVAKLNIPPRLIDYLSYN).

Belongs to the ankyrin SOCS box (ASB) family.

The protein operates within protein modification; protein ubiquitination. Its function is as follows. May be a substrate-recognition component of a SCF-like ECS (Elongin-Cullin-SOCS-box protein) E3 ubiquitin-protein ligase complex which mediates the ubiquitination and subsequent proteasomal degradation of target proteins. In Mus musculus (Mouse), this protein is Ankyrin repeat and SOCS box protein 13 (Asb13).